The chain runs to 393 residues: Na(+)/H(+) antiporter NhaA 1 (393 aa).

The next 11 membrane-spanning stretches (helical) occupy residues 23–43, 58–78, 96–116, 126–146, 155–175, 178–198, 224–244, 265–285, 298–318, 334–354, and 367–387; these read AGGVSLMVAAALALIVANSPF, LSLTDWINDALMAVFFLLVGL, MLPGIAAAGGVILPAIIFTAF, GWAVPSATDIAFALGVLSLLG, VFLATLAILDDLAAVVIIAIF, AEISMPYLGGAFAAAIVLFVM, GVHATVAGVVTALMIPLKAAP, VAFIIVPIFGFANAGISFAGL, IMLGLFIGKQLGVFGAAWLAI, LYGVAVLCGIGFTMSIFIGLL, and IGVLAGSGLSAICGYILLRLV.

The protein belongs to the NhaA Na(+)/H(+) (TC 2.A.33) antiporter family.

It localises to the cell inner membrane. It carries out the reaction Na(+)(in) + 2 H(+)(out) = Na(+)(out) + 2 H(+)(in). Its function is as follows. Na(+)/H(+) antiporter that extrudes sodium in exchange for external protons. The sequence is that of Na(+)/H(+) antiporter NhaA 1 from Brucella anthropi (strain ATCC 49188 / DSM 6882 / CCUG 24695 / JCM 21032 / LMG 3331 / NBRC 15819 / NCTC 12168 / Alc 37) (Ochrobactrum anthropi).